Consider the following 245-residue polypeptide: Lytic switch protein BZLF1 (245 aa).

Residues 1-167 (MMDPNSTSED…RTRKPQQPES (167 aa)) are transactivation. Threonine 14 and threonine 159 each carry phosphothreonine; by host. The Bipartite nuclear localization signal motif lies at 157–194 (RRTRKPQQPESLEECDSELEIKRYKNRVASRKCRAKFK). Residues serine 167, serine 173, and serine 186 each carry the phosphoserine; by host modification. Residues 170–228 (ECDSELEIKRYKNRVASRKCRAKFKQLLQHYREVAAAKSSENDRLRLLLKQMCPSLDVD) enclose the bZIP domain. Residues 178–195 (KRYKNRVASRKCRAKFKQ) form a basic motif region. Residues 196-228 (LLQHYREVAAAKSSENDRLRLLLKQMCPSLDVD) are leucine-zipper. The interval 229-245 (SIIPRTPDVLHEDLLNF) is accessory activation domain.

This sequence belongs to the bZIP family. Homodimer. Interacts (via b-ZIP domain) with the DNA polymerase processivity factor BMRF1 (via N-terminus); this interaction may inhibit BZLF1-induced transcription of the BMRF1 promoter. Interacts with human UBN1, CRTC2 and RACK1. Interacts (via N-terminus) with human PAX5 (via N-terminus); this interaction inhibits BZLF1-mediated lytic viral reactivation. Interacts (via leucine-zipper domain) with host CEBPA; this interaction induces G1 host cell cycle arrest. Interacts (via C-terminus) with host TP53BP1 (via C-terminus); this interaction is involved in the activation of the viral lytic cycle. Interacts with host chromatin-remodeling ATPase INO80; this interaction participates to the activation of early lytic viral genes by BZLF1. Interacts with host regulator of chromatin SMARCA5/hSNF2H; this interaction participates to the activation of early lytic viral genes by BZLF1. Interacts with host PLSCR1/Phospholipid scramblase 1; this interaction negatively regulates the transcriptional regulatory activity of BZLF1 by preventing the formation of the BZLF1-CBP complex.

It localises to the host nucleus. Functionally, transcription factor that acts as a molecular switch to induce the transition from the latent to the lytic or productive phase of the virus cycle. Mediates the switch from the latent to the lytic cycle of infection in cells containing a highly methylated viral genome. Probably binds to silenced chromatin and recruits host chromatin-remodeling enzymes. Regulates this switch by binding to 2 types of ZEBRA response elements (ZREs): the CpG-free AP-1 like elements (latency) and the methylated CpG-containing elements (lytic replication). Activates preferentially the methylated forms of the viral lytic R (BRLF1) and Na (BRRF1) gene promoters, the latters being the first genes activated during Z-mediated reactivation in latently infected cells. BZLF1 and BRLF1 act together to trigger lytic replication. Also binds the lytic origin of replication, oriLyt. Induces G1 cell cycle arrest by stabilizing the host CCAAT/enhancer binding protein CEBPA. This function is important because the lytic cycle preferentially takes place in host cells arrested in G1. This chain is Lytic switch protein BZLF1, found in Epstein-Barr virus (strain B95-8) (HHV-4).